A 1201-amino-acid polypeptide reads, in one-letter code: Peroxisomal ATPase PEX6 (1201 aa).

The interval 247 to 300 is disordered; that stretch reads LPSNNNNNNNNNNNNNNNNNNNNNNNNNNNNNNNNKEEEVEEEEVEVEEEEKDN. Over residues 250 to 280 the composition is skewed to low complexity; the sequence is NNNNNNNNNNNNNNNNNNNNNNNNNNNNNNN. Positions 284–297 are enriched in acidic residues; that stretch reads EEVEEEEVEVEEEE. 959 to 966 lines the ATP pocket; it reads GPPGTGKT.

This sequence belongs to the AAA ATPase family. Interacts with PEX1; forming the PEX1-PEX6 AAA ATPase complex, which is composed of a heterohexamer formed by a trimer of PEX1-PEX6 dimers.

It localises to the cytoplasm. The protein resides in the cytosol. Its subcellular location is the peroxisome membrane. The catalysed reaction is ATP + H2O = ADP + phosphate + H(+). Its function is as follows. Component of the PEX1-PEX6 AAA ATPase complex, a protein dislocase complex that mediates the ATP-dependent extraction of the PEX5 receptor from peroxisomal membranes, an essential step for PEX5 recycling. Specifically recognizes PEX5 monoubiquitinated at 'Cys-11', and pulls it out of the peroxisome lumen through the PEX2-PEX10-PEX12 retrotranslocation channel. Extraction by the PEX1-PEX6 AAA ATPase complex is accompanied by unfolding of the TPR repeats and release of bound cargo from PEX5. This is Peroxisomal ATPase PEX6 (pex6) from Dictyostelium discoideum (Social amoeba).